A 96-amino-acid chain; its full sequence is UPF0235 protein YE3436 (96 aa).

The protein belongs to the UPF0235 family.

This is UPF0235 protein YE3436 from Yersinia enterocolitica serotype O:8 / biotype 1B (strain NCTC 13174 / 8081).